The sequence spans 139 residues: S-protein homolog 14 (139 aa).

Positions 1-20 (MNRFIIFMFVVVTYFGLNVA) are cleaved as a signal peptide. Asn136 carries N-linked (GlcNAc...) asparagine glycosylation.

Belongs to the plant self-incompatibility (S1) protein family.

It is found in the secreted. In Arabidopsis thaliana (Mouse-ear cress), this protein is S-protein homolog 14.